Here is a 217-residue protein sequence, read N- to C-terminus: Thiamine-phosphate synthase (217 aa).

Residues 39-43 and N71 each bind 4-amino-2-methyl-5-(diphosphooxymethyl)pyrimidine; that span reads QYRDK. Mg(2+)-binding residues include D72 and D91. Residue T110 participates in 4-amino-2-methyl-5-(diphosphooxymethyl)pyrimidine binding. 137-139 is a 2-[(2R,5Z)-2-carboxy-4-methylthiazol-5(2H)-ylidene]ethyl phosphate binding site; the sequence is SHT. A 4-amino-2-methyl-5-(diphosphooxymethyl)pyrimidine-binding site is contributed by K140. G167 contributes to the 2-[(2R,5Z)-2-carboxy-4-methylthiazol-5(2H)-ylidene]ethyl phosphate binding site.

This sequence belongs to the thiamine-phosphate synthase family. It depends on Mg(2+) as a cofactor.

It carries out the reaction 2-[(2R,5Z)-2-carboxy-4-methylthiazol-5(2H)-ylidene]ethyl phosphate + 4-amino-2-methyl-5-(diphosphooxymethyl)pyrimidine + 2 H(+) = thiamine phosphate + CO2 + diphosphate. The enzyme catalyses 2-(2-carboxy-4-methylthiazol-5-yl)ethyl phosphate + 4-amino-2-methyl-5-(diphosphooxymethyl)pyrimidine + 2 H(+) = thiamine phosphate + CO2 + diphosphate. It catalyses the reaction 4-methyl-5-(2-phosphooxyethyl)-thiazole + 4-amino-2-methyl-5-(diphosphooxymethyl)pyrimidine + H(+) = thiamine phosphate + diphosphate. It participates in cofactor biosynthesis; thiamine diphosphate biosynthesis; thiamine phosphate from 4-amino-2-methyl-5-diphosphomethylpyrimidine and 4-methyl-5-(2-phosphoethyl)-thiazole: step 1/1. Condenses 4-methyl-5-(beta-hydroxyethyl)thiazole monophosphate (THZ-P) and 2-methyl-4-amino-5-hydroxymethyl pyrimidine pyrophosphate (HMP-PP) to form thiamine monophosphate (TMP). The protein is Thiamine-phosphate synthase of Alcanivorax borkumensis (strain ATCC 700651 / DSM 11573 / NCIMB 13689 / SK2).